Here is a 217-residue protein sequence, read N- to C-terminus: NADPH-dependent 3-demethoxyubiquinone 3-hydroxylase, mitochondrial (217 aa).

2 repeat units span residues Ile-49 to Met-130 and Gly-131 to Val-217. A 2 X approximate tandem repeats region spans residues Ile-49–Val-217. Arg-52 is a binding site for NADH. Fe cation is bound by residues Glu-61, Glu-91, His-94, Glu-143, Glu-178, and His-181. Arg-216 contributes to the NADH binding site.

Belongs to the COQ7 family. In terms of assembly, component of a multi-subunit COQ enzyme complex. The cofactor is Fe cation.

It localises to the mitochondrion inner membrane. It catalyses the reaction a 5-methoxy-2-methyl-3-(all-trans-polyprenyl)benzoquinone + NADH + O2 = a 3-demethylubiquinone + NAD(+) + H2O. It participates in cofactor biosynthesis; ubiquinone biosynthesis. In terms of biological role, catalyzes the hydroxylation of the 5-methoxy-2-methyl-3-(all-trans-polyprenyl)benzoquinone at the C6 position and participates in the biosynthesis of ubiquinone. Catalyzes the reaction through a substrate-mediated reduction pathway, whereby NADH shuttles electrons to 5-methoxy-2-methyl-3-(all-trans-decaprenyl)benzoquinone, which then transfers the electrons to the two Fe(3+) centers. The binding of 5-methoxy-2-methyl-3-(all-trans-polyprenyl)benzoquinone (DMQn) mediates reduction of the diiron center by nicotinamide adenine dinucleotide (NADH) and initiates oxygen activation for subsequent DMQ hydroxylation. Also has a structural role in the COQ enzyme complex, stabilizing other COQ polypeptides. This Dictyostelium discoideum (Social amoeba) protein is NADPH-dependent 3-demethoxyubiquinone 3-hydroxylase, mitochondrial.